The chain runs to 119 residues: Large ribosomal subunit protein bL20 (119 aa).

The protein belongs to the bacterial ribosomal protein bL20 family.

In terms of biological role, binds directly to 23S ribosomal RNA and is necessary for the in vitro assembly process of the 50S ribosomal subunit. It is not involved in the protein synthesizing functions of that subunit. In Syntrophus aciditrophicus (strain SB), this protein is Large ribosomal subunit protein bL20.